The following is a 745-amino-acid chain: uncharacterized protein (745 aa).

An HTH araC/xylS-type domain is found at Asn-158–Asp-256. 2 DNA-binding regions (H-T-H motif) span residues Ser-175–Leu-196 and Ile-223–Thr-246.

This is an uncharacterized protein from Staphylococcus aureus (strain MW2).